The sequence spans 315 residues: 4-hydroxy-3-methylbut-2-enyl diphosphate reductase (315 aa).

Cys12 contributes to the [4Fe-4S] cluster binding site. Residues His41 and His74 each contribute to the (2E)-4-hydroxy-3-methylbut-2-enyl diphosphate site. 2 residues coordinate dimethylallyl diphosphate: His41 and His74. Positions 41 and 74 each coordinate isopentenyl diphosphate. Cys96 serves as a coordination point for [4Fe-4S] cluster. His124 contributes to the (2E)-4-hydroxy-3-methylbut-2-enyl diphosphate binding site. Position 124 (His124) interacts with dimethylallyl diphosphate. Position 124 (His124) interacts with isopentenyl diphosphate. The Proton donor role is filled by Glu126. Thr168 serves as a coordination point for (2E)-4-hydroxy-3-methylbut-2-enyl diphosphate. Cys198 serves as a coordination point for [4Fe-4S] cluster. Ser226, Ser227, Asn228, and Ser270 together coordinate (2E)-4-hydroxy-3-methylbut-2-enyl diphosphate. Positions 226, 227, 228, and 270 each coordinate dimethylallyl diphosphate. Isopentenyl diphosphate-binding residues include Ser226, Ser227, Asn228, and Ser270.

Belongs to the IspH family. Requires [4Fe-4S] cluster as cofactor.

It catalyses the reaction isopentenyl diphosphate + 2 oxidized [2Fe-2S]-[ferredoxin] + H2O = (2E)-4-hydroxy-3-methylbut-2-enyl diphosphate + 2 reduced [2Fe-2S]-[ferredoxin] + 2 H(+). The enzyme catalyses dimethylallyl diphosphate + 2 oxidized [2Fe-2S]-[ferredoxin] + H2O = (2E)-4-hydroxy-3-methylbut-2-enyl diphosphate + 2 reduced [2Fe-2S]-[ferredoxin] + 2 H(+). It participates in isoprenoid biosynthesis; dimethylallyl diphosphate biosynthesis; dimethylallyl diphosphate from (2E)-4-hydroxy-3-methylbutenyl diphosphate: step 1/1. Its pathway is isoprenoid biosynthesis; isopentenyl diphosphate biosynthesis via DXP pathway; isopentenyl diphosphate from 1-deoxy-D-xylulose 5-phosphate: step 6/6. Its function is as follows. Catalyzes the conversion of 1-hydroxy-2-methyl-2-(E)-butenyl 4-diphosphate (HMBPP) into a mixture of isopentenyl diphosphate (IPP) and dimethylallyl diphosphate (DMAPP). Acts in the terminal step of the DOXP/MEP pathway for isoprenoid precursor biosynthesis. This Pseudomonas entomophila (strain L48) protein is 4-hydroxy-3-methylbut-2-enyl diphosphate reductase.